A 423-amino-acid chain; its full sequence is Mannose-6-phosphate isomerase (423 aa).

Residue A2 is modified to N-acetylalanine. S102 and S108 each carry phosphoserine. Positions 110, 112, 137, and 276 each coordinate Zn(2+). R295 is a catalytic residue.

This sequence belongs to the mannose-6-phosphate isomerase type 1 family. It depends on Zn(2+) as a cofactor.

It is found in the cytoplasm. The enzyme catalyses D-mannose 6-phosphate = D-fructose 6-phosphate. Its pathway is nucleotide-sugar biosynthesis; GDP-alpha-D-mannose biosynthesis; alpha-D-mannose 1-phosphate from D-fructose 6-phosphate: step 1/2. Isomerase that catalyzes the interconversion of fructose-6-P and mannose-6-P and has a critical role in the supply of D-mannose derivatives required for many eukaryotic glycosylation reactions. This Macaca fascicularis (Crab-eating macaque) protein is Mannose-6-phosphate isomerase (MPI).